Here is a 105-residue protein sequence, read N- to C-terminus: MDIKKGDLVLVISGKDKGKRGRVISVLPSEEKVVVEGVNIVKKHTRPTAKMRQGGIIEKPAPLYRCKVMLICPHCNQPTRVKHTFLEDGRKVRVCSKCKEIIDRV.

Belongs to the universal ribosomal protein uL24 family. Part of the 50S ribosomal subunit.

Its function is as follows. One of two assembly initiator proteins, it binds directly to the 5'-end of the 23S rRNA, where it nucleates assembly of the 50S subunit. One of the proteins that surrounds the polypeptide exit tunnel on the outside of the subunit. The polypeptide is Large ribosomal subunit protein uL24 (Dictyoglomus turgidum (strain DSM 6724 / Z-1310)).